Reading from the N-terminus, the 548-residue chain is Chaperonin GroEL (548 aa).

ATP contacts are provided by residues 30–33, Lys51, 87–91, Gly415, 479–481, and Asp495; these read TLGP, DGTTT, and NAA.

This sequence belongs to the chaperonin (HSP60) family. In terms of assembly, forms a cylinder of 14 subunits composed of two heptameric rings stacked back-to-back. Interacts with the co-chaperonin GroES.

It is found in the cytoplasm. It catalyses the reaction ATP + H2O + a folded polypeptide = ADP + phosphate + an unfolded polypeptide.. In terms of biological role, together with its co-chaperonin GroES, plays an essential role in assisting protein folding. The GroEL-GroES system forms a nano-cage that allows encapsulation of the non-native substrate proteins and provides a physical environment optimized to promote and accelerate protein folding. This is Chaperonin GroEL from Klebsiella pneumoniae subsp. pneumoniae (strain ATCC 700721 / MGH 78578).